A 214-amino-acid polypeptide reads, in one-letter code: ATP-dependent Clp protease proteolytic subunit 2 (214 aa).

The Nucleophile role is filled by Ser-110. Residue His-135 is part of the active site.

The protein belongs to the peptidase S14 family. In terms of assembly, fourteen ClpP subunits assemble into 2 heptameric rings which stack back to back to give a disk-like structure with a central cavity, resembling the structure of eukaryotic proteasomes.

The protein localises to the cytoplasm. The catalysed reaction is Hydrolysis of proteins to small peptides in the presence of ATP and magnesium. alpha-casein is the usual test substrate. In the absence of ATP, only oligopeptides shorter than five residues are hydrolyzed (such as succinyl-Leu-Tyr-|-NHMec, and Leu-Tyr-Leu-|-Tyr-Trp, in which cleavage of the -Tyr-|-Leu- and -Tyr-|-Trp bonds also occurs).. In terms of biological role, cleaves peptides in various proteins in a process that requires ATP hydrolysis. Has a chymotrypsin-like activity. Plays a major role in the degradation of misfolded proteins. The protein is ATP-dependent Clp protease proteolytic subunit 2 of Mycobacterium bovis (strain ATCC BAA-935 / AF2122/97).